We begin with the raw amino-acid sequence, 238 residues long: DNA repair protein RecO (238 aa).

Belongs to the RecO family.

Its function is as follows. Involved in DNA repair and RecF pathway recombination. This chain is DNA repair protein RecO, found in Flavobacterium psychrophilum (strain ATCC 49511 / DSM 21280 / CIP 103535 / JIP02/86).